Reading from the N-terminus, the 921-residue chain is Isoleucine--tRNA ligase (921 aa).

The 'HIGH' region signature appears at 57–67; the sequence is PYANGELHMGH. An L-isoleucyl-5'-AMP-binding site is contributed by E552. The 'KMSKS' region signature appears at 593–597; the sequence is KMSKS. An ATP-binding site is contributed by K596. Residues C888, C891, C908, and C911 each coordinate Zn(2+).

It belongs to the class-I aminoacyl-tRNA synthetase family. IleS type 1 subfamily. As to quaternary structure, monomer. Requires Zn(2+) as cofactor.

The protein resides in the cytoplasm. The enzyme catalyses tRNA(Ile) + L-isoleucine + ATP = L-isoleucyl-tRNA(Ile) + AMP + diphosphate. In terms of biological role, catalyzes the attachment of isoleucine to tRNA(Ile). As IleRS can inadvertently accommodate and process structurally similar amino acids such as valine, to avoid such errors it has two additional distinct tRNA(Ile)-dependent editing activities. One activity is designated as 'pretransfer' editing and involves the hydrolysis of activated Val-AMP. The other activity is designated 'posttransfer' editing and involves deacylation of mischarged Val-tRNA(Ile). The chain is Isoleucine--tRNA ligase from Listeria innocua serovar 6a (strain ATCC BAA-680 / CLIP 11262).